The sequence spans 601 residues: uncharacterized protein (601 aa).

Residues 1–24 (MKLSSLPSGLGLASLLGLISSATA) form the signal peptide.

Its subcellular location is the membrane. This is an uncharacterized protein from Schizosaccharomyces pombe (strain 972 / ATCC 24843) (Fission yeast).